The primary structure comprises 513 residues: U3 small nucleolar RNA-associated protein 15 (513 aa).

6 WD repeats span residues 37 to 78 (KEHN…KTFS), 79 to 118 (RFKD…TILL), 124 to 162 (THPT…EPQL), 166 to 206 (GATD…STPI), 210 to 247 (NHDQ…KLYE), and 250 to 294 (NFNK…QVKF). Residues 332–354 (KKKEKRSSDKENAPASFNKNAKS) are disordered.

Interacts with snoRNA U3. Interacts with MPP10. Component of the ribosomal small subunit (SSU) processome composed of at least 40 protein subunits and snoRNA U3. In the absence of snoRNA3, forms a complex with other t-UTPs. This complex can associate with pre-18S ribosomal RNAs.

The protein resides in the nucleus. It is found in the nucleolus. Its function is as follows. Involved in nucleolar processing of pre-18S ribosomal RNA. Required for optimal pre-ribosomal RNA transcription by RNA polymerase I together with a subset of U3 proteins required for transcription (t-UTPs). This chain is U3 small nucleolar RNA-associated protein 15 (UTP15), found in Saccharomyces cerevisiae (strain ATCC 204508 / S288c) (Baker's yeast).